The sequence spans 73 residues: Toxin Td3 (73 aa).

A signal peptide spans 1–7 (IGMVVEC). One can recognise an LCN-type CS-alpha/beta domain in the interval 8–70 (KDGYLMGPDG…VWERATNRCG (63 aa)). 4 disulfides stabilise this stretch: Cys-18/Cys-69, Cys-22/Cys-44, Cys-30/Cys-50, and Cys-34/Cys-52. Residue Lys-71 is modified to Lysine amide.

This sequence belongs to the long (4 C-C) scorpion toxin superfamily. Sodium channel inhibitor family. Beta subfamily. In terms of tissue distribution, expressed by the venom gland.

It is found in the secreted. Functionally, beta toxins bind voltage-independently at site-4 of sodium channels (Nav) and shift the voltage of activation toward more negative potentials thereby affecting sodium channel activation and promoting spontaneous and repetitive firing. This is Toxin Td3 from Tityus discrepans (Venezuelan scorpion).